The chain runs to 627 residues: Carnitine O-acetyltransferase, mitochondrial (627 aa).

His336 functions as the Proton acceptor in the catalytic mechanism. Residues Lys418 and 422 to 429 contribute to the CoA site; that span reads KKFKVSPD. Residues Tyr451, Ser453, and Thr464 each contribute to the (R)-carnitine site. Residue Gln553 coordinates CoA. Residues 625–627 carry the Microbody targeting signal motif; the sequence is PKL.

It belongs to the carnitine/choline acetyltransferase family.

The protein localises to the peroxisome. The protein resides in the mitochondrion inner membrane. It carries out the reaction (R)-carnitine + acetyl-CoA = O-acetyl-(R)-carnitine + CoA. Functionally, carnitine acetylase is specific for short chain fatty acids. Carnitine acetylase seems to affect the flux through the pyruvate dehydrogenase complex. It may be involved as well in the transport of acetyl-CoA into mitochondria. The polypeptide is Carnitine O-acetyltransferase, mitochondrial (CAT2) (Candida tropicalis (Yeast)).